Reading from the N-terminus, the 282-residue chain is MSSYENHRALDGLTLGKSTDYRDNYDASLLQGVPRSLNRDPLGLTADNLPFHGADIWTLYELSWLNSHGLPQIAIGHVELDYTSVNLIESKSFKLYLNSFNQTRFDTWETVRQTLERDLRACAQGNVSVKLHRLDELEGLPVAHFHGACIDDQDISIDNYQFTASYLQHAVSGEKRVEETLVSHLLKSNCLITHQPDWGSIQIQYRGRKIDREKLLRYLVSFRHHNEFHEQCVERIFNDLLRFCQPETLSVYARYTRRGGLDINPWRSNTDFVPATGRLARQ.

88 to 90 (IES) provides a ligand contact to substrate. Residue 90-91 (SK) participates in NADPH binding. The active-site Thioimide intermediate is the Cys-190. Asp-197 acts as the Proton donor in catalysis. 229–230 (HE) provides a ligand contact to substrate. Position 258–259 (258–259 (RG)) interacts with NADPH.

This sequence belongs to the GTP cyclohydrolase I family. QueF type 2 subfamily. Homodimer.

The protein resides in the cytoplasm. The enzyme catalyses 7-aminomethyl-7-carbaguanine + 2 NADP(+) = 7-cyano-7-deazaguanine + 2 NADPH + 3 H(+). It participates in tRNA modification; tRNA-queuosine biosynthesis. Functionally, catalyzes the NADPH-dependent reduction of 7-cyano-7-deazaguanine (preQ0) to 7-aminomethyl-7-deazaguanine (preQ1). This is NADPH-dependent 7-cyano-7-deazaguanine reductase from Salmonella arizonae (strain ATCC BAA-731 / CDC346-86 / RSK2980).